A 256-amino-acid chain; its full sequence is Peroxisomal membrane protein PMP30B (256 aa).

Belongs to the peroxin-11 family.

Its subcellular location is the peroxisome membrane. Involved in peroxisomal proliferation. Could participate in peroxisomal elongation or fission. May be involved in parceling of peroxisomes into regular quanta. This chain is Peroxisomal membrane protein PMP30B (PEX11B), found in Candida boidinii (Yeast).